The following is a 225-amino-acid chain: Glutathione S-transferase Mu 3 (225 aa).

Residues S5–G92 form the GST N-terminal domain. Residues Y11–W12, W50–K54, and N63–L64 each bind glutathione. K54 participates in a covalent cross-link: Glycyl lysine isopeptide (Lys-Gly) (interchain with G-Cter in SUMO2). K73 participates in a covalent cross-link: Glycyl lysine isopeptide (Lys-Gly) (interchain with G-Cter in SUMO2). Q76 to S77 provides a ligand contact to glutathione. Positions T94–I212 constitute a GST C-terminal domain. Position 120 (Y120) interacts with substrate.

The protein belongs to the GST superfamily. Mu family. Homodimer.

It is found in the cytoplasm. It carries out the reaction RX + glutathione = an S-substituted glutathione + a halide anion + H(+). Its function is as follows. Conjugation of reduced glutathione to a wide number of exogenous and endogenous hydrophobic electrophiles. May govern uptake and detoxification of both endogenous compounds and xenobiotics at the testis and brain blood barriers. The sequence is that of Glutathione S-transferase Mu 3 (GSTM3) from Macaca fuscata fuscata (Japanese macaque).